The primary structure comprises 418 residues: Voltage-gated ClC-type chloride channel ClcB (418 aa).

The Cytoplasmic portion of the chain corresponds to 1–4 (MFRR). Residues 5-25 (LLIATIVGILAAFAVAGFRHA) traverse the membrane as a helical segment. At 26-53 (MLLLEWLFLNNDSGSLVNAATNLSPWRR) the chain is on the periplasmic side. Residues 54-74 (LLTPALGGLAAGLLLMGWQKF) traverse the membrane as a helical segment. The Cytoplasmic segment spans residues 75–145 (TQQRPHAPTD…QRFTPRQEWK (71 aa)). A helical transmembrane segment spans residues 146-166 (LWIACGAAAGMAAAYRAPLAG). Topologically, residues 167-177 (SLFIAEVLFGT) are periplasmic. Residues 178–200 (MMLASLGPVIISAVVALLISNLI) form a helical membrane-spanning segment. Topologically, residues 201–221 (NHSDALLYSVQLSVTVQARDY) are cytoplasmic. A helical transmembrane segment spans residues 222 to 242 (ALIISTGVLAGLCGPLLLTLM). The Periplasmic portion of the chain corresponds to 243–257 (NACHRGFVSLKLAPP). Residues 258-278 (WQLALGGLIVGLLSLFTPAVW) form a helical membrane-spanning segment. Topologically, residues 279 to 290 (GNGYSTVQSFLT) are cytoplasmic. Residues 291 to 311 (APPLLMIIAGIFLCKLCAVLA) form a helical membrane-spanning segment. At 312–315 (SSGS) the chain is on the periplasmic side. A helical transmembrane segment spans residues 316–336 (GAPGGVFTPTLFIGLAIGMLY). Over 337–351 (GRSLGLWLPDGEEIT) the chain is Cytoplasmic. Residues 352–372 (LLLGLTGMATLLAATTHAPIM) form a helical membrane-spanning segment. Over 373 to 379 (STLMICE) the chain is Periplasmic. Residues 380–400 (MTGEYQLLPGLLIACVIASVI) traverse the membrane as a helical segment. The Cytoplasmic portion of the chain corresponds to 401-418 (SRTLHRDSIYRQHTAKHS).

Belongs to the chloride channel (TC 2.A.49) family. ClcB subfamily.

The protein localises to the cell inner membrane. Its function is as follows. Probably acts as an electrical shunt for an outwardly-directed proton pump that is linked to amino acid decarboxylation, as part of the extreme acid resistance (XAR) response. This is Voltage-gated ClC-type chloride channel ClcB (clcB) from Escherichia coli O6:H1 (strain CFT073 / ATCC 700928 / UPEC).